The sequence spans 732 residues: uncharacterized protein (732 aa).

2 helical membrane-spanning segments follow: residues 687-707 and 712-732; these read YLFPVVGVAALLLIGNMGSDL and GVKVATALSAMLLAIFAYYTS.

Belongs to the FadG family.

Its subcellular location is the cell membrane. This is an uncharacterized protein from Bacillus subtilis (strain 168).